Reading from the N-terminus, the 96-residue chain is Muconolactone Delta-isomerase 1 (96 aa).

The protein belongs to the muconolactone Delta-isomerase family. Homodecamer.

It carries out the reaction (S)-muconolactone = (4,5-dihydro-5-oxofuran-2-yl)-acetate. It functions in the pathway aromatic compound metabolism; beta-ketoadipate pathway; 5-oxo-4,5-dihydro-2-furylacetate from catechol: step 3/3. In Acinetobacter lwoffii, this protein is Muconolactone Delta-isomerase 1 (catC1).